We begin with the raw amino-acid sequence, 125 residues long: Cu-Zn superoxide dismutase-like protein OPG175 (125 aa).

A disulfide bridge connects residues Cys-52 and Cys-102.

It belongs to the Cu-Zn superoxide dismutase family.

Its subcellular location is the virion. The protein resides in the host cytoplasm. Its function is as follows. Superoxide dismutase-like protein with no enzymatic activity. The sequence is that of Cu-Zn superoxide dismutase-like protein OPG175 (OPG175) from Cowpox virus (strain Brighton Red) (CPV).